A 369-amino-acid chain; its full sequence is Cyclic AMP receptor-like protein A (369 aa).

Residues 1–4 (MIQI) lie on the Extracellular side of the membrane. The chain crosses the membrane as a helical span at residues 5-22 (LLSTFISFIIIIVSSNDI). The Cytoplasmic portion of the chain corresponds to 23 to 72 (RSGENDNFNNNKMINNFLTTITTNDTIIIKETESPNDYDFSKEQIESLDK). Residues 73 to 93 (IVYFSSTMGIVGALFIIVSFF) traverse the membrane as a helical segment. At 94-100 (LFKAART) the chain is on the extracellular side. Residues 101–121 (FATKMIFFLSLSDLFAAIFYL) traverse the membrane as a helical segment. The Cytoplasmic segment spans residues 122–146 (PYYRDSDIMCNLQGMGLVFFLSSSY). Residues 147-167 (LWTMCISISLFMVFFTTIFEL) traverse the membrane as a helical segment. The Extracellular segment spans residues 168–173 (NHWFKY). The chain crosses the membrane as a helical span at residues 174–194 (FHFICWGIPLFTAIISLIFHA). At 195–212 (YGKTGSWCFISDPTSIFR) the chain is on the cytoplasmic side. A helical transmembrane segment spans residues 213 to 233 (LLYYLPLIVVFFINLVVFIAI). The Extracellular segment spans residues 234–247 (RWKISQHSNSLVSR). A helical transmembrane segment spans residues 248-268 (VNIIVSFYLIAFSLSQLPTII). The Cytoplasmic segment spans residues 269 to 369 (NSIQNFSDPD…KLIIDDYNRV (101 aa)).

Belongs to the G-protein coupled receptor 5 family.

It is found in the membrane. In terms of biological role, receptor for cAMP which may play a role in prestalk cell differentiation. May act as a negative regulator of cell growth. The sequence is that of Cyclic AMP receptor-like protein A (crlA) from Dictyostelium discoideum (Social amoeba).